The primary structure comprises 395 residues: Argininosuccinate synthase (395 aa).

ATP is bound by residues 9 to 17 (AYSGGLDTS) and Ala37. Residues Tyr87 and Ser92 each coordinate L-citrulline. Gly117 provides a ligand contact to ATP. L-aspartate-binding residues include Thr119, Asn123, and Asp124. Asn123 contacts L-citrulline. 5 residues coordinate L-citrulline: Arg127, Ser173, Ser182, Glu258, and Tyr270.

The protein belongs to the argininosuccinate synthase family. Type 1 subfamily. Homotetramer.

It localises to the cytoplasm. The catalysed reaction is L-citrulline + L-aspartate + ATP = 2-(N(omega)-L-arginino)succinate + AMP + diphosphate + H(+). It participates in amino-acid biosynthesis; L-arginine biosynthesis; L-arginine from L-ornithine and carbamoyl phosphate: step 2/3. This is Argininosuccinate synthase from Methanospirillum hungatei JF-1 (strain ATCC 27890 / DSM 864 / NBRC 100397 / JF-1).